We begin with the raw amino-acid sequence, 131 residues long: Small ribosomal subunit protein uS9 (131 aa).

A disordered region spans residues 102-131 (AGFLTRDPRMKERRKYGLKKARKAPQFSKR). Positions 112 to 131 (KERRKYGLKKARKAPQFSKR) are enriched in basic residues.

This sequence belongs to the universal ribosomal protein uS9 family.

This is Small ribosomal subunit protein uS9 from Desulfitobacterium hafniense (strain DSM 10664 / DCB-2).